We begin with the raw amino-acid sequence, 207 residues long: ATP-dependent Clp protease proteolytic subunit (207 aa).

Residue serine 111 is the Nucleophile of the active site. Histidine 136 is a catalytic residue.

The protein belongs to the peptidase S14 family. As to quaternary structure, fourteen ClpP subunits assemble into 2 heptameric rings which stack back to back to give a disk-like structure with a central cavity, resembling the structure of eukaryotic proteasomes.

It localises to the cytoplasm. It catalyses the reaction Hydrolysis of proteins to small peptides in the presence of ATP and magnesium. alpha-casein is the usual test substrate. In the absence of ATP, only oligopeptides shorter than five residues are hydrolyzed (such as succinyl-Leu-Tyr-|-NHMec, and Leu-Tyr-Leu-|-Tyr-Trp, in which cleavage of the -Tyr-|-Leu- and -Tyr-|-Trp bonds also occurs).. In terms of biological role, cleaves peptides in various proteins in a process that requires ATP hydrolysis. Has a chymotrypsin-like activity. Plays a major role in the degradation of misfolded proteins. The sequence is that of ATP-dependent Clp protease proteolytic subunit from Aeromonas salmonicida (strain A449).